The sequence spans 250 residues: ATP synthase subunit b 2 (250 aa).

A helical membrane pass occupies residues 2–22; that stretch reads LIDWFTVFAQILNFVILLGLL.

This sequence belongs to the ATPase B chain family. F-type ATPases have 2 components, F(1) - the catalytic core - and F(0) - the membrane proton channel. F(1) has five subunits: alpha(3), beta(3), gamma(1), delta(1), epsilon(1). F(0) has four main subunits: a(1), b(1), b'(1) and c(10-14). The alpha and beta chains form an alternating ring which encloses part of the gamma chain. F(1) is attached to F(0) by a central stalk formed by the gamma and epsilon chains, while a peripheral stalk is formed by the delta, b and b' chains.

The protein localises to the cellular thylakoid membrane. Functionally, f(1)F(0) ATP synthase produces ATP from ADP in the presence of a proton or sodium gradient. F-type ATPases consist of two structural domains, F(1) containing the extramembraneous catalytic core and F(0) containing the membrane proton channel, linked together by a central stalk and a peripheral stalk. During catalysis, ATP synthesis in the catalytic domain of F(1) is coupled via a rotary mechanism of the central stalk subunits to proton translocation. Component of the F(0) channel, it forms part of the peripheral stalk, linking F(1) to F(0). This Picosynechococcus sp. (strain ATCC 27264 / PCC 7002 / PR-6) (Agmenellum quadruplicatum) protein is ATP synthase subunit b 2.